A 204-amino-acid chain; its full sequence is MADKGLLLVLSGPSGVGKGTVKSAIVENKVFPFEYSVSMTTRKPRPGEVNGKDYYFVSEGRFKEAINNGELLEYNNYVGHYYGTPLGPVKEMLHEGKDVLLEIDVNGAQKVREKMPDGVFIFLTPPDLHTLHLRLEHRGTESEDVIRGRIKQARNEILEMEDYDYAVVNDTVANAVDHIKAIVDAEHVSVKRVIDDYRKMVEED.

Positions 5–184 (GLLLVLSGPS…AVDHIKAIVD (180 aa)) constitute a Guanylate kinase-like domain. 12 to 19 (GPSGVGKG) serves as a coordination point for ATP.

The protein belongs to the guanylate kinase family.

The protein resides in the cytoplasm. It catalyses the reaction GMP + ATP = GDP + ADP. Essential for recycling GMP and indirectly, cGMP. The polypeptide is Guanylate kinase (Lactobacillus acidophilus (strain ATCC 700396 / NCK56 / N2 / NCFM)).